The primary structure comprises 70 residues: Brevinin-1S (70 aa).

The first 22 residues, 1 to 22 (MFTLKKSLLLLFFLGTINLSLC), serve as a signal peptide directing secretion. Positions 23–44 (EEERNAEEERRDDPEERDVEVE) are excised as a propeptide. Cysteines 64 and 70 form a disulfide.

Belongs to the frog skin active peptide (FSAP) family. Brevinin subfamily. In terms of tissue distribution, expressed by the skin glands.

The protein localises to the secreted. Its function is as follows. Antimicrobial peptide. This is Brevinin-1S from Odorrana schmackeri (Schmacker's frog).